We begin with the raw amino-acid sequence, 180 residues long: Signaling threshold-regulating transmembrane adapter 1 (180 aa).

Residues 1-24 (MSRDYNCTTDDQLAWGIPSISHAW) are Extracellular-facing. The N-linked (GlcNAc...) asparagine glycan is linked to asparagine 6. The chain crosses the membrane as a helical; Signal-anchor for type III membrane protein span at residues 25–45 (GLWALLGVVTVLLLISLAALL). Residues 46 to 180 (SQWTRGRRRN…AYANSQPAPS (135 aa)) are Cytoplasmic-facing. Residues serine 63 and serine 66 each carry the phosphoserine modification. The residue at position 73 (tyrosine 73) is a Phosphotyrosine. The interval 73–76 (YGNL) is interaction with GRB2. The interval 81-103 (TGRLSQEPRSEEQDPPSSGGLAR) is disordered. 2 positions are modified to phosphoserine: serine 85 and serine 90. Tyrosine 111, tyrosine 132, and tyrosine 153 each carry phosphotyrosine. Residues 130-135 (IKYCEV) form an interaction with PTPN11 region. The segment at 153–156 (YASV) is interaction with CSK. Phosphoserine is present on serine 166. Tyrosine 172 carries the phosphotyrosine modification. Residues 172 to 175 (YANS) form an interaction with GRB2 region.

In terms of assembly, homodimer; disulfide-linked. When phosphorylated, interacts with PTPN11/SHP2, GRB2 and CSK. In terms of processing, phosphorylated on tyrosines upon TCR activation; which leads to the recruitment of PTPN11, GRB2 and CSK. Expressed in thymus and spleen, with highest levels in immature thymocytes (at protein level).

The protein resides in the cell membrane. Its function is as follows. Negatively regulates T-cell antigen receptor (TCR)-mediated signaling. Involved in positive selection of T-cells. The polypeptide is Signaling threshold-regulating transmembrane adapter 1 (Sit1) (Mus musculus (Mouse)).